A 446-amino-acid polypeptide reads, in one-letter code: MMITLRKLPLAVAVAAGVMSAQAMAVDFHGYARSGIGWTGSGGEQQCFQTTGAQSKYRLGNECETYAELKLGQEVWKEGDKSFYFDTNVAYSVAQKNDWEATDPAFREANVQGKNLIEWLPGSTIWAGKRFYQRHDVHMIDFYYWDISGPGAGLENIDVGFGKLSLAATRSSEAGGSSSFASNNIYDYTNETANDVFDVRLAQMEINPGGTLELGVDYGRANLRDNYRLVDGASKDGWLFTAEHTQSVLKGFNKFVVQYATDSMTSQGKGLSQGSGVAFDNEKFAYNINNNGHMLRILDHGAISMGDNWDMMYVGMYQDINWDNDNGTKWWTVGIRPMYKWTPIMSTVMEIGYDNVESQRTGDKNNQYKITLAQQWQAGDSIWSRPAIRVFATYAKWDEKWGYDYTGSSSTNPYYGKAVSADFNGGSFGRGDSDEWTFGAQMEIWW.

The first 25 residues, M1–A25, serve as a signal peptide directing secretion.

It belongs to the porin LamB (TC 1.B.3) family. In terms of assembly, homotrimer formed of three 18-stranded antiparallel beta-barrels, containing three independent channels.

The protein localises to the cell outer membrane. The enzyme catalyses beta-maltose(in) = beta-maltose(out). In terms of biological role, involved in the transport of maltose and maltodextrins. In Escherichia coli O6:K15:H31 (strain 536 / UPEC), this protein is Maltoporin.